The sequence spans 318 residues: NAD(P)H-dependent D-xylose reductase (318 aa).

The Proton donor role is filled by Tyr48. His110 is a binding site for substrate. Residues 165-166 (SN), 214-223 (SNFGPLSFLE), and 270-280 (KSTFPNTLAVN) each bind NAD(+).

This sequence belongs to the aldo/keto reductase family.

The catalysed reaction is xylitol + NAD(+) = D-xylose + NADH + H(+). It carries out the reaction xylitol + NADP(+) = D-xylose + NADPH + H(+). It functions in the pathway carbohydrate metabolism; D-xylose degradation. In terms of biological role, reduces D-xylose into xylitol. Has a preference for NADPH, but can also utilize NADH as cosubstrate. The protein is NAD(P)H-dependent D-xylose reductase (XYL1) of Pachysolen tannophilus (Yeast).